Here is a 445-residue protein sequence, read N- to C-terminus: Trigger factor (445 aa).

A PPIase FKBP-type domain is found at 164 to 249; that stretch reads GDQVTFDFEG…VKKVEEAKLP (86 aa).

The protein belongs to the FKBP-type PPIase family. Tig subfamily.

The protein resides in the cytoplasm. The catalysed reaction is [protein]-peptidylproline (omega=180) = [protein]-peptidylproline (omega=0). Its function is as follows. Involved in protein export. Acts as a chaperone by maintaining the newly synthesized protein in an open conformation. Functions as a peptidyl-prolyl cis-trans isomerase. The sequence is that of Trigger factor from Psychrobacter sp. (strain PRwf-1).